The following is a 36-amino-acid chain: Amanexitide proprotein 1 (36 aa).

Positions 1–10 are excised as a propeptide; that stretch reads MSDINTARLP. Residues 11–19 constitute a cross-link (cyclopeptide (Val-Pro)); sequence VFSLPVFFP. Residues 20–36 constitute a propeptide that is removed on maturation; that stretch reads FVSDDIQAVLTRGESLC.

Belongs to the MSDIN fungal toxin family. Post-translationally, processed by the macrocyclase-peptidase enzyme POPB to yield a toxic cyclic nonapeptide. POPB first removes 10 residues from the N-terminus. Conformational trapping of the remaining peptide forces the enzyme to release this intermediate rather than proceed to macrocyclization. The enzyme rebinds the remaining peptide in a different conformation and catalyzes macrocyclization of the N-terminal 9 residues. As to expression, expressed in basidiocarps.

Functionally, cyclic nonapeptide that belongs to the MSDIN-like toxin family responsible for a large number of food poisoning cases and deaths. This is Amanexitide proprotein 1 from Amanita exitialis (Guangzhou destroying angel).